A 682-amino-acid chain; its full sequence is DNA ligase (682 aa).

Residues 42–46 (DAAYD), 88–89 (SL), and Glu-121 each bind NAD(+). Catalysis depends on Lys-123, which acts as the N6-AMP-lysine intermediate. NAD(+) is bound by residues Arg-144, Glu-180, Lys-291, and Lys-315. 4 residues coordinate Zn(2+): Cys-409, Cys-412, Cys-427, and Cys-433. Positions 601 to 682 (AAGGALAGKT…FRSLAGLPPG (82 aa)) constitute a BRCT domain.

The protein belongs to the NAD-dependent DNA ligase family. LigA subfamily. Requires Mg(2+) as cofactor. Mn(2+) serves as cofactor.

It carries out the reaction NAD(+) + (deoxyribonucleotide)n-3'-hydroxyl + 5'-phospho-(deoxyribonucleotide)m = (deoxyribonucleotide)n+m + AMP + beta-nicotinamide D-nucleotide.. In terms of biological role, DNA ligase that catalyzes the formation of phosphodiester linkages between 5'-phosphoryl and 3'-hydroxyl groups in double-stranded DNA using NAD as a coenzyme and as the energy source for the reaction. It is essential for DNA replication and repair of damaged DNA. The protein is DNA ligase of Acidiphilium cryptum (strain JF-5).